A 260-amino-acid chain; its full sequence is Homeobox-leucine zipper protein HOX25 (260 aa).

Positions M1–G10 are enriched in acidic residues. Disordered regions lie at residues M1–R24, A121–A145, and S190–S221. A DNA-binding region (homeobox) is located at residues A19–Q79. The tract at residues K78–N122 is leucine-zipper. Residues S205–Y218 are compositionally biased toward acidic residues.

Belongs to the HD-ZIP homeobox family. Class I subfamily. In terms of tissue distribution, expressed in roots, leaf sheaths and blades and panicles.

Its subcellular location is the nucleus. Its function is as follows. Probable transcription factor. In Oryza sativa subsp. indica (Rice), this protein is Homeobox-leucine zipper protein HOX25 (HOX25).